The chain runs to 354 residues: Probable protein phosphatase 2C 27 (354 aa).

The PPM-type phosphatase domain occupies arginine 54–phenylalanine 319. Mn(2+) contacts are provided by aspartate 98, glycine 99, aspartate 267, and aspartate 310.

This sequence belongs to the PP2C family. It depends on Mg(2+) as a cofactor. Requires Mn(2+) as cofactor.

The enzyme catalyses O-phospho-L-seryl-[protein] + H2O = L-seryl-[protein] + phosphate. It catalyses the reaction O-phospho-L-threonyl-[protein] + H2O = L-threonyl-[protein] + phosphate. The chain is Probable protein phosphatase 2C 27 from Oryza sativa subsp. japonica (Rice).